The chain runs to 78 residues: Probable [Fe-S]-dependent transcriptional repressor (78 aa).

Residues Cys56, Cys61, Cys64, and Cys70 each coordinate iron-sulfur cluster.

The protein belongs to the FeoC family.

Functionally, may function as a transcriptional regulator that controls feoABC expression. The sequence is that of Probable [Fe-S]-dependent transcriptional repressor from Citrobacter koseri (strain ATCC BAA-895 / CDC 4225-83 / SGSC4696).